Here is a 252-residue protein sequence, read N- to C-terminus: Low-density lipoprotein receptor-related protein 5-like protein (252 aa).

5 LDL-receptor class B repeats span residues 3-45, 46-88, 89-132, 133-175, and 176-218; these read GHVY…NWVA, RSLY…HPEM, GLTY…DLQE, GKLY…LGDF, and IYWT…DKVV. Residues 223 to 247 form a disordered region; that stretch reads HADRNGGAATCASSRPTQPGLAAPS.

This is Low-density lipoprotein receptor-related protein 5-like protein (LRP5L) from Homo sapiens (Human).